The chain runs to 571 residues: Podocalyxin (571 aa).

An N-terminal signal peptide occupies residues 1-22 (MRPAPPPPLLLLLLLLPPPSLS). The Extracellular portion of the chain corresponds to 23–474 (HDGTIIAATS…EETEDRFSMP (452 aa)). Positions 94–361 (NTVIAPDQDE…QGDDRIKCES (268 aa)) are disordered. Over residues 106 to 116 (STNPTIATSDS) the composition is skewed to polar residues. The N-linked (GlcNAc...) asparagine glycan is linked to Asn123. 4 stretches are compositionally biased toward polar residues: residues 126–144 (ILPS…TQTA), 151–169 (NPGT…QTTS), 176–203 (KPSS…STTL), and 218–245 (TASS…SSVT). Residue Asn199 is glycosylated (N-linked (GlcNAc...) asparagine). Low complexity predominate over residues 282-300 (TTSLPSETESLESPSSESP). Over residues 301 to 311 (SQPPKLRPTGP) the composition is skewed to pro residues. Over residues 312 to 322 (PSSGSSGPAAS) the composition is skewed to low complexity. Asn373 and Asn383 each carry an N-linked (GlcNAc...) asparagine glycan. Residues 475-495 (LIITIVCMASFLLLVAALYGC) form a helical membrane-spanning segment. The Cytoplasmic portion of the chain corresponds to 496–571 (CHQRLSQRKD…DLDEEEDTHL (76 aa)). Thr531 carries the post-translational modification Phosphothreonine. At Ser550 the chain carries Phosphoserine. Position 569 is a phosphothreonine (Thr569).

The protein belongs to the podocalyxin family. Found in a complex with EZR, PODXL and NHERF2. Associates with the actin cytoskeleton through complex formation with EZR and NHERF2. Interacts (via the C-terminal PDZ-binding motif DTHL) with NHERF1 (via the PDZ domains); interaction is not detected in glomerular epithelium cells. Interacts (via the C-terminal PDZ-binding motif DTHL) with NHERF2 (via the PDZ 1 domain); interaction is detected in glomerular epithelium cells. Interacts with EZR. Monomer; when associated with the membrane raft. Oligomer; when integrated in the apical membrane. Interacts with NHERF2. Interacts (via the C-terminal PDZ-binding motif DTHL) with NHERF1 (via the PDZ domains); the interaction take place early in the secretory pathway and is necessary for its apical membrane sorting. Post-translationally, N- and O-linked glycosylated. Sialoglycoprotein. In terms of tissue distribution, expressed in glomerular and tubular epithelial cells and peritubular capillaries of the kidney (at protein level). Expressed in heart, lung, renal cortex and medulla, kidney and muscle.

Its subcellular location is the apical cell membrane. The protein resides in the membrane raft. The protein localises to the cell projection. It localises to the lamellipodium. It is found in the filopodium. Its subcellular location is the ruffle. The protein resides in the microvillus. The protein localises to the membrane. In terms of biological role, involved in the regulation of both adhesion and cell morphology and cancer progression. Functions as an anti-adhesive molecule that maintains an open filtration pathway between neighboring foot processes in the podocyte by charge repulsion. Acts as a pro-adhesive molecule, enhancing the adherence of cells to immobilized ligands, increasing the rate of migration and cell-cell contacts in an integrin-dependent manner. Induces the formation of apical actin-dependent microvilli. Involved in the formation of a preapical plasma membrane subdomain to set up initial epithelial polarization and the apical lumen formation during renal tubulogenesis. Plays a role in cancer development and aggressiveness by inducing cell migration and invasion through its interaction with the actin-binding protein EZR. Affects EZR-dependent signaling events, leading to increased activities of the MAPK and PI3K pathways in cancer cells. This is Podocalyxin (PODXL) from Canis lupus familiaris (Dog).